Consider the following 187-residue polypeptide: Large ribosomal subunit protein uL10 (187 aa).

This sequence belongs to the universal ribosomal protein uL10 family. As to quaternary structure, part of the ribosomal stalk of the 50S ribosomal subunit. The N-terminus interacts with L11 and the large rRNA to form the base of the stalk. The C-terminus forms an elongated spine to which L12 dimers bind in a sequential fashion forming a multimeric L10(L12)X complex.

Functionally, forms part of the ribosomal stalk, playing a central role in the interaction of the ribosome with GTP-bound translation factors. This chain is Large ribosomal subunit protein uL10, found in Synechococcus sp. (strain JA-3-3Ab) (Cyanobacteria bacterium Yellowstone A-Prime).